The primary structure comprises 497 residues: Cytochrome P450 76AD1 (497 aa).

The chain crosses the membrane as a helical span at residues 4–24 (ATLAMILAIWFISFHFIKLLF). C439 serves as a coordination point for heme.

This sequence belongs to the cytochrome P450 family. Heme serves as cofactor.

The protein localises to the membrane. Its pathway is pigment biosynthesis; betalain biosynthesis. Converts L-DOPA to cyclo-DOPA in the betalain pathway. Provides the cyclo-DOPA moiety of all red betacyanins. The sequence is that of Cytochrome P450 76AD1 from Beta vulgaris (Sugar beet).